A 116-amino-acid polypeptide reads, in one-letter code: Methionine-R-sulfoxide reductase B1 (116 aa).

The 106-residue stretch at 1 to 106 folds into the MsrB domain; it reads MSFCSFFGGE…FSSSLKFVPK (106 aa). Residues cysteine 23, cysteine 26, cysteine 71, and cysteine 74 each contribute to the Zn(2+) site. Selenocysteine 95 functions as the Nucleophile in the catalytic mechanism. Residue selenocysteine 95 is a non-standard amino acid, selenocysteine.

It belongs to the MsrB Met sulfoxide reductase family. Zn(2+) serves as cofactor. Truncated MSRB1/SEPX1 proteins produced by failed UGA/Sec decoding are ubiquitinated by the CRL2(FEM1C) E3 ubiquitin-protein ligase complex.

The protein localises to the cytoplasm. It is found in the nucleus. Its subcellular location is the cytoskeleton. The catalysed reaction is L-methionyl-[protein] + [thioredoxin]-disulfide + H2O = L-methionyl-(R)-S-oxide-[protein] + [thioredoxin]-dithiol. It catalyses the reaction [thioredoxin]-disulfide + L-methionine + H2O = L-methionine (R)-S-oxide + [thioredoxin]-dithiol. Its function is as follows. Methionine-sulfoxide reductase that specifically reduces methionine (R)-sulfoxide back to methionine. While in many cases, methionine oxidation is the result of random oxidation following oxidative stress, methionine oxidation is also a post-translational modification that takes place on specific residue. Acts as a regulator of actin assembly by reducing methionine (R)-sulfoxide mediated by MICALs (MICAL1, MICAL2 or MICAL3) on actin, thereby promoting filament repolymerization. Plays a role in innate immunity by reducing oxidized actin, leading to actin repolymerization in macrophages. The sequence is that of Methionine-R-sulfoxide reductase B1 (MSRB1) from Pongo abelii (Sumatran orangutan).